The chain runs to 359 residues: 5-formaminoimidazole-4-carboxamide-1-(beta)-D-ribofuranosyl 5'-monophosphate synthetase (359 aa).

5-amino-1-(5-phospho-beta-D-ribosyl)imidazole-4-carboxamide is bound by residues His-28 and Ser-95. The region spanning 115–346 (ELMIWETDRD…MGRRIAREIK (232 aa)) is the ATP-grasp domain. ATP is bound by residues 144–206 (PEEI…ANIY) and Glu-228. 5-amino-1-(5-phospho-beta-D-ribosyl)imidazole-4-carboxamide is bound at residue Asn-256. Residues Glu-295 and Glu-308 each contribute to the Mg(2+) site.

The protein belongs to the phosphohexose mutase family. Mg(2+) serves as cofactor. The cofactor is Mn(2+).

The enzyme catalyses 5-amino-1-(5-phospho-beta-D-ribosyl)imidazole-4-carboxamide + formate + ATP = 5-formamido-1-(5-phospho-D-ribosyl)imidazole-4-carboxamide + ADP + phosphate. Its pathway is purine metabolism; IMP biosynthesis via de novo pathway; 5-formamido-1-(5-phospho-D-ribosyl)imidazole-4-carboxamide from 5-amino-1-(5-phospho-D-ribosyl)imidazole-4-carboxamide (formate route): step 1/1. Its function is as follows. Catalyzes the ATP- and formate-dependent formylation of 5-aminoimidazole-4-carboxamide-1-beta-d-ribofuranosyl 5'-monophosphate (AICAR) to 5-formaminoimidazole-4-carboxamide-1-beta-d-ribofuranosyl 5'-monophosphate (FAICAR) in the absence of folates. This Archaeoglobus fulgidus (strain ATCC 49558 / DSM 4304 / JCM 9628 / NBRC 100126 / VC-16) protein is 5-formaminoimidazole-4-carboxamide-1-(beta)-D-ribofuranosyl 5'-monophosphate synthetase.